Here is a 1323-residue protein sequence, read N- to C-terminus: ABC transporter C family member 12 (1323 aa).

The region spanning 110–396 is the ABC transmembrane type-1 1 domain; it reads HCISLFFYSI…LPILIALGIQ (287 aa). The next 6 helical transmembrane spans lie at 111–131, 152–172, 227–247, 252–272, 338–358, and 375–395; these read CISL…PEIL, MGYY…FCNY, VFGI…CLAL, IGWP…FNGL, ILIA…FSTY, and SYLN…ALGI. Residues 428–652 form the ABC transporter 1 domain; sequence VYMKNSTTTW…KLEFASLLQE (225 aa). 464–471 serves as a coordination point for ATP; sequence GSVGSGKS. The disordered stretch occupies residues 657–695; sequence ENTKGDDSDDDDDKKDDDKKEEKVEKPKQSDKDGTLISE. Basic and acidic residues predominate over residues 672–690; it reads DDDKKEEKVEKPKQSDKDG. The next 5 helical transmembrane spans lie at 712–732, 772–792, 840–860, 862–882, and 952–972; these read VTAG…LETG, IYIG…FSFF, LIAT…ATLI, ISII…LFFI, and WLGL…CIFI. Residues 720–1010 form the ABC transmembrane type-1 2 domain; sequence FLFAMILFLL…GVLQAADTET (291 aa). The region spanning 1047 to 1281 is the ABC transporter 2 domain; it reads IKFDNLVMRY…QNGLLTWLVN (235 aa). An ATP-binding site is contributed by 1081-1088; it reads GRTGAGKS.

Belongs to the ABC transporter superfamily. ABCC family. Conjugate transporter (TC 3.A.1.208) subfamily.

The protein resides in the membrane. This is ABC transporter C family member 12 (abcC12) from Dictyostelium discoideum (Social amoeba).